Consider the following 1197-residue polypeptide: Pleckstrin homology domain-containing family A member 7 (1197 aa).

WW domains are found at residues 8–41 (DTLPDNGSYGVCRDGRVFFIDDEARATTWLHPRT) and 53–86 (SDLPSGWEEGFTKEGASFFIDHNQRTTTFIHPVT). Residues 98–148 (LQDQPGGRMLKQPSSTISEASTTVTTSTVDSTSGSKGSRSSGRVHSFGKRD) are disordered. The segment covering 111–140 (SSTISEASTTVTTSTVDSTSGSKGSRSSGR) has biased composition (low complexity). A PH domain is found at 158 to 257 (PVVVRGWLYK…WVRAMNQAAL (100 aa)). Disordered regions lie at residues 348-384 (PGSTPPSRVASRAPSRAVSTPPVVQRNGTPIEQNGMP), 423-467 (LVST…QLPS), and 508-577 (FRHG…TVRP). Over residues 528 to 546 (VSSTRNNSDVSRSVSVPPT) the composition is skewed to low complexity. A compositionally biased stretch (basic and acidic residues) spans 568–577 (TPAERVTVRP). Residues 678–799 (DKILQELEFR…RIEDVMTGLS (122 aa)) are a coiled coil. 2 disordered regions span residues 830-928 (SRCM…SYSN) and 1032-1064 (HQRALVRERKRNLSQGERHHSRASTRPVNSDPG). Over residues 913 to 924 (RQSDERKRDRES) the composition is skewed to basic and acidic residues. Positions 1016 to 1044 (QRVRMSVEEQLERMKRHQRALVRERKRNL) form a coiled coil. Residues 1032-1043 (HQRALVRERKRN) are compositionally biased toward basic residues.

The protein resides in the cell junction. It localises to the adherens junction. The protein localises to the cytoplasm. Its subcellular location is the cytoskeleton. It is found in the microtubule organizing center. The protein resides in the centrosome. Functionally, required for zonula adherens biogenesis and maintenance. This Danio rerio (Zebrafish) protein is Pleckstrin homology domain-containing family A member 7 (plekha7).